The primary structure comprises 295 residues: Shikimate dehydrogenase (NADP(+)) (295 aa).

Shikimate-binding positions include 20–22 and T68; that span reads SWS. The active-site Proton acceptor is the K72. Residues N93 and D108 each contribute to the shikimate site. Residues 132–136 and M234 each bind NADP(+); that span reads GNGGA. Shikimate is bound at residue Y236. G257 is an NADP(+) binding site.

Belongs to the shikimate dehydrogenase family. Homodimer.

The catalysed reaction is shikimate + NADP(+) = 3-dehydroshikimate + NADPH + H(+). The protein operates within metabolic intermediate biosynthesis; chorismate biosynthesis; chorismate from D-erythrose 4-phosphate and phosphoenolpyruvate: step 4/7. Functionally, involved in the biosynthesis of the chorismate, which leads to the biosynthesis of aromatic amino acids. Catalyzes the reversible NADPH linked reduction of 3-dehydroshikimate (DHSA) to yield shikimate (SA). The sequence is that of Shikimate dehydrogenase (NADP(+)) from Chlorobaculum tepidum (strain ATCC 49652 / DSM 12025 / NBRC 103806 / TLS) (Chlorobium tepidum).